Reading from the N-terminus, the 281-residue chain is Cardosin-F (281 aa).

One can recognise a Peptidase A1 domain in the interval 18-278 (YYGEIGIGTP…DYGNLLVGFA (261 aa)). Asp-36 is an active-site residue. A disulfide bridge connects residues Cys-181 and Cys-185. The active site involves Asp-190. Asn-213 is a glycosylation site (N-linked (GlcNAc...) asparagine).

The protein belongs to the peptidase A1 family. As to quaternary structure, heterodimer of a light chain and a heavy chain. An intermediate form is produced first, and undergoes proteolytic processing to remove the internal plant-specific insert (PSI) and the propeptide. N-glycosylated. In terms of tissue distribution, pistils.

It is found in the microsome membrane. Its subcellular location is the protein storage vacuole. The protein resides in the secreted. The protein localises to the cell wall. It localises to the extracellular space. It is found in the extracellular matrix. With respect to regulation, inhibited by pepstatin. Functionally, aspartic protease with a high preference for bonds between hydrophobic residues. This is Cardosin-F from Cynara cardunculus (Cardoon).